The primary structure comprises 100 residues: NADH-ubiquinone oxidoreductase chain 4L (100 aa).

3 consecutive transmembrane segments (helical) span residues I3–L23, I28–Y48, and L64–F84.

This sequence belongs to the complex I subunit 4L family.

The protein localises to the mitochondrion membrane. It carries out the reaction a ubiquinone + NADH + 5 H(+)(in) = a ubiquinol + NAD(+) + 4 H(+)(out). Its function is as follows. Core subunit of the mitochondrial membrane respiratory chain NADH dehydrogenase (Complex I) that is believed to belong to the minimal assembly required for catalysis. Complex I functions in the transfer of electrons from NADH to the respiratory chain. The immediate electron acceptor for the enzyme is believed to be ubiquinone. The chain is NADH-ubiquinone oxidoreductase chain 4L (ND4L) from Phytophthora infestans (Potato late blight agent).